A 233-amino-acid chain; its full sequence is 7-cyano-7-deazaguanine synthase (233 aa).

Position 7–17 (Leu-7–Ser-17) interacts with ATP. Residues Cys-195, Cys-206, Cys-209, and Cys-212 each coordinate Zn(2+).

The protein belongs to the QueC family. It depends on Zn(2+) as a cofactor.

The enzyme catalyses 7-carboxy-7-deazaguanine + NH4(+) + ATP = 7-cyano-7-deazaguanine + ADP + phosphate + H2O + H(+). It functions in the pathway purine metabolism; 7-cyano-7-deazaguanine biosynthesis. Catalyzes the ATP-dependent conversion of 7-carboxy-7-deazaguanine (CDG) to 7-cyano-7-deazaguanine (preQ(0)). In Methanococcus maripaludis (strain C6 / ATCC BAA-1332), this protein is 7-cyano-7-deazaguanine synthase.